The sequence spans 132 residues: Large ribosomal subunit protein bL19 (132 aa).

The protein belongs to the bacterial ribosomal protein bL19 family.

Functionally, this protein is located at the 30S-50S ribosomal subunit interface and may play a role in the structure and function of the aminoacyl-tRNA binding site. The polypeptide is Large ribosomal subunit protein bL19 (Nitrosomonas europaea (strain ATCC 19718 / CIP 103999 / KCTC 2705 / NBRC 14298)).